A 379-amino-acid polypeptide reads, in one-letter code: Methionine aminopeptidase 1 (379 aa).

The C6H2-type zinc-finger motif lies at 7-60 (KHICCGIDCNNEADRLQCPKCLNDGVKSYFCGQECFRNSWNIHKHLHRPPNVEK). Zn(2+) is bound by residues cysteine 10, cysteine 15, cysteine 24, cysteine 27, cysteine 37, cysteine 41, histidine 49, and histidine 53. A protein is bound at residue histidine 192. 3 residues coordinate Zn(2+): aspartate 209, aspartate 220, and histidine 289. Residue histidine 296 coordinates a protein. Zn(2+)-binding residues include glutamate 322 and glutamate 353. A Phosphoserine modification is found at serine 373.

It belongs to the peptidase M24A family. Methionine aminopeptidase type 1 subfamily. In terms of assembly, associates with the 60S ribosomal subunit of the 80S translational complex. Zn(2+) is required as a cofactor. The cofactor is Co(2+). Requires Mn(2+) as cofactor. Fe(2+) serves as cofactor.

Its subcellular location is the cytoplasm. The protein resides in the nucleus. The protein localises to the nucleolus. It carries out the reaction Release of N-terminal amino acids, preferentially methionine, from peptides and arylamides.. Cotranslationally removes the N-terminal methionine from nascent proteins. The N-terminal methionine is often cleaved when the second residue in the primary sequence is small and uncharged (Met-Ala-, Cys, Gly, Pro, Ser, Thr, or Val). This chain is Methionine aminopeptidase 1 (fma1), found in Schizosaccharomyces pombe (strain 972 / ATCC 24843) (Fission yeast).